Consider the following 287-residue polypeptide: Diphthine methyl ester synthase (287 aa).

Residues leucine 9, aspartate 84, glycine 87, 112 to 113, valine 163, valine 221, and histidine 248 each bind S-adenosyl-L-methionine; that span reads SI.

The protein belongs to the diphthine synthase family.

It is found in the cytoplasm. It carries out the reaction 2-[(3S)-amino-3-carboxypropyl]-L-histidyl-[translation elongation factor 2] + 4 S-adenosyl-L-methionine = diphthine methyl ester-[translation elongation factor 2] + 4 S-adenosyl-L-homocysteine + 3 H(+). Its pathway is protein modification; peptidyl-diphthamide biosynthesis. In terms of biological role, S-adenosyl-L-methionine-dependent methyltransferase that catalyzes four methylations of the modified target histidine residue in translation elongation factor 2 (EF-2), to form an intermediate called diphthine methyl ester. The four successive methylation reactions represent the second step of diphthamide biosynthesis. This Gibberella zeae (strain ATCC MYA-4620 / CBS 123657 / FGSC 9075 / NRRL 31084 / PH-1) (Wheat head blight fungus) protein is Diphthine methyl ester synthase (DPH5).